Reading from the N-terminus, the 746-residue chain is PAN2-PAN3 deadenylation complex subunit pan3 (746 aa).

The C3H1-type zinc finger occupies 7-35; sequence PKNQKQCKNIALHGYCRNSDKCEFSHELT. A compositionally biased stretch (low complexity) spans 64–97; the sequence is QQQQQQQNSNGNGSNNTATSNNPIISPNSNIASP. Disordered regions lie at residues 64–100, 169–205, and 219–275; these read QQQQQQQNSNGNGSNNTATSNNPIISPNSNIASPLKK, DDQHLYPYGDNSVDDYEQHQYEPQPQPNNGIDPNMNN, and NASP…PSLQ. The segment covering 196 to 205 has biased composition (polar residues); that stretch reads NNGIDPNMNN. The span at 221–275 shows a compositional bias: low complexity; that stretch reads SPQSYQQQFQQPNPSPQSSSQQQQQQQQQQQQAVYQQQQQQQPSSQPLAQNPSLQ. Positions 351-610 are pseudokinase domain; the sequence is DPNDPRIKNI…NIDEVVLMIS (260 aa). Residues R407, 457 to 464, and 509 to 510 each bind ATP; these read EFFPGSET and SK. Positions 611-649 form a coiled coil; the sequence is GRLLQENNYLHTYTDDLETELSKEYENGRLFRLVTKLGF. The knob domain stretch occupies residues 650 to 746; it reads INERPLYDMD…SELVSQKSHI (97 aa).

The protein belongs to the protein kinase superfamily. PAN3 family. As to quaternary structure, homodimer. Forms a heterotrimer with a catalytic subunit PAN2 to form the poly(A)-nuclease (PAN) deadenylation complex. Interacts (via PAM-2 motif) with poly(A)-binding protein (via PABC domain), conferring substrate specificity of the enzyme complex.

The protein resides in the cytoplasm. Its function is as follows. Regulatory subunit of the poly(A)-nuclease (PAN) deadenylation complex, one of two cytoplasmic mRNA deadenylases involved in mRNA turnover. PAN specifically shortens poly(A) tails of RNA and the activity is stimulated by poly(A)-binding protein (PABP). PAN deadenylation is followed by rapid degradation of the shortened mRNA tails by the CCR4-NOT complex. Deadenylated mRNAs are then degraded by two alternative mechanisms, namely exosome-mediated 3'-5' exonucleolytic degradation, or deadenylation-dependent mRNA decaping and subsequent 5'-3' exonucleolytic degradation by XRN1. PAN3 acts as a positive regulator for PAN activity, recruiting the catalytic subunit PAN2 to mRNA via its interaction with RNA and PABP. The chain is PAN2-PAN3 deadenylation complex subunit pan3 from Dictyostelium discoideum (Social amoeba).